We begin with the raw amino-acid sequence, 208 residues long: Outer-membrane lipoprotein LolB (208 aa).

Positions 1–17 (MIRRLLGVALLTGAITG) are cleaved as a signal peptide. Cys-18 is lipidated: N-palmitoyl cysteine. A lipid anchor (S-diacylglycerol cysteine) is attached at Cys-18.

It belongs to the LolB family. Monomer.

The protein localises to the cell outer membrane. Its function is as follows. Plays a critical role in the incorporation of lipoproteins in the outer membrane after they are released by the LolA protein. This chain is Outer-membrane lipoprotein LolB, found in Marinobacter nauticus (strain ATCC 700491 / DSM 11845 / VT8) (Marinobacter aquaeolei).